We begin with the raw amino-acid sequence, 85 residues long: Small proline-rich protein 2D (85 aa).

A compositionally biased stretch (low complexity) spans 1 to 11 (MSYQQQQCKQP). Residues 1 to 20 (MSYQQQQCKQPCQPPPVCPP) are disordered. 4 tandem repeats follow at residues 21–29 (KKCPEPCPP), 30–38 (LKCPEPCPP), 39–47 (PKCPEPCPP), and 48–56 (PKCPEPCPE). The tract at residues 21-56 (KKCPEPCPPLKCPEPCPPPKCPEPCPPPKCPEPCPE) is 4 X 9 AA approximate tandem repeats. A disordered region spans residues 57-85 (PCPPPSCQQKCPPAQPPPPCQQKCPPKSK).

This sequence belongs to the cornifin (SPRR) family. Expressed in uterus.

Its subcellular location is the cytoplasm. In terms of biological role, cross-linked envelope protein of keratinocytes. It is a keratinocyte protein that first appears in the cell cytosol, but ultimately becomes cross-linked to membrane proteins by transglutaminase. All that results in the formation of an insoluble envelope beneath the plasma membrane. The sequence is that of Small proline-rich protein 2D (Sprr2d) from Mus musculus (Mouse).